The following is a 276-amino-acid chain: MNSKNYHQKKRFGQHWLVNKKILEKIKEIAVLNENDFILEIGPGKGALTSKLLDSEIKKLHAIELDKDLINLLNDKFNNNDKFSLQQGDILSVNLDSINKKITKVIANIPYNITGPILDIFIGRLGIIRNYNYEKIIFLMQKDVVDRILSKEGSPNAGALSIRIQLLSKIKRICDVPPSSFSPPPKVFSSLVVFEPIKNDLRLDISLEKYIDKLLRISFNSRRKMLRNTLNSILSNEEINELSESSKVCFNLRPQDISIHQWIKLAENCIKIKKKI.

Residues H15, L17, G42, E64, D89, and N108 each contribute to the S-adenosyl-L-methionine site.

It belongs to the class I-like SAM-binding methyltransferase superfamily. rRNA adenine N(6)-methyltransferase family. RsmA subfamily.

It localises to the cytoplasm. It carries out the reaction adenosine(1518)/adenosine(1519) in 16S rRNA + 4 S-adenosyl-L-methionine = N(6)-dimethyladenosine(1518)/N(6)-dimethyladenosine(1519) in 16S rRNA + 4 S-adenosyl-L-homocysteine + 4 H(+). Its function is as follows. Specifically dimethylates two adjacent adenosines (A1518 and A1519) in the loop of a conserved hairpin near the 3'-end of 16S rRNA in the 30S particle. May play a critical role in biogenesis of 30S subunits. In Prochlorococcus marinus (strain MIT 9312), this protein is Ribosomal RNA small subunit methyltransferase A.